A 323-amino-acid chain; its full sequence is Fructose-1,6-bisphosphatase class 1 (323 aa).

The Mg(2+) site is built by Glu88, Asp107, Leu109, and Asp110. Substrate is bound by residues 110-113 (DGSS) and Asn200. Glu272 provides a ligand contact to Mg(2+).

This sequence belongs to the FBPase class 1 family. Homotetramer. Requires Mg(2+) as cofactor.

Its subcellular location is the cytoplasm. The catalysed reaction is beta-D-fructose 1,6-bisphosphate + H2O = beta-D-fructose 6-phosphate + phosphate. Its pathway is carbohydrate biosynthesis; gluconeogenesis. The chain is Fructose-1,6-bisphosphatase class 1 from Acinetobacter baumannii (strain ATCC 17978 / DSM 105126 / CIP 53.77 / LMG 1025 / NCDC KC755 / 5377).